We begin with the raw amino-acid sequence, 301 residues long: Glycine--tRNA ligase alpha subunit (301 aa).

The protein belongs to the class-II aminoacyl-tRNA synthetase family. Tetramer of two alpha and two beta subunits.

The protein resides in the cytoplasm. The enzyme catalyses tRNA(Gly) + glycine + ATP = glycyl-tRNA(Gly) + AMP + diphosphate. The sequence is that of Glycine--tRNA ligase alpha subunit from Alteromonas mediterranea (strain DSM 17117 / CIP 110805 / LMG 28347 / Deep ecotype).